The following is a 253-amino-acid chain: Small ribosomal subunit protein uS3 (253 aa).

A KH type-2 domain is found at 38 to 106 (IRKYIHARLS…EVQINIFEIK (69 aa)). Positions 216–253 (AGMDKKQAGQGGGKGGDSPRGDRKPFNKGGKPDARKRK) are disordered. A compositionally biased stretch (basic and acidic residues) spans 232–253 (DSPRGDRKPFNKGGKPDARKRK).

The protein belongs to the universal ribosomal protein uS3 family. In terms of assembly, part of the 30S ribosomal subunit. Forms a tight complex with proteins S10 and S14.

Its function is as follows. Binds the lower part of the 30S subunit head. Binds mRNA in the 70S ribosome, positioning it for translation. The protein is Small ribosomal subunit protein uS3 of Flavobacterium psychrophilum (strain ATCC 49511 / DSM 21280 / CIP 103535 / JIP02/86).